The following is a 204-amino-acid chain: ATP-dependent Clp protease proteolytic subunit (204 aa).

Ser102 acts as the Nucleophile in catalysis. Residue His127 is part of the active site.

Belongs to the peptidase S14 family. Fourteen ClpP subunits assemble into 2 heptameric rings which stack back to back to give a disk-like structure with a central cavity, resembling the structure of eukaryotic proteasomes.

The protein resides in the cytoplasm. It catalyses the reaction Hydrolysis of proteins to small peptides in the presence of ATP and magnesium. alpha-casein is the usual test substrate. In the absence of ATP, only oligopeptides shorter than five residues are hydrolyzed (such as succinyl-Leu-Tyr-|-NHMec, and Leu-Tyr-Leu-|-Tyr-Trp, in which cleavage of the -Tyr-|-Leu- and -Tyr-|-Trp bonds also occurs).. In terms of biological role, cleaves peptides in various proteins in a process that requires ATP hydrolysis. Has a chymotrypsin-like activity. Plays a major role in the degradation of misfolded proteins. The protein is ATP-dependent Clp protease proteolytic subunit of Neisseria meningitidis serogroup C (strain 053442).